We begin with the raw amino-acid sequence, 401 residues long: MSALITHDRSTPVTGSLLPYVETPAPAPLQTQQVAGELKDKNGGVSSQGVQLPAPLAVVASQVTEGQQQEVTKLLESVTRGAAGSQLISNYVSVLTKFTLASPDTFEIELGKLVSNLEEVRKDIKIADIQRLHEQNMKKIEENQEKIKETEENAKQVKKSGIASKIFGWLSAIASVIVGAIMVASGVGAVAGAMMVASGVIGMANMAVKQAAEDGLISQEAMKILGPILTAIEVALTVVSTVMTFGGSALKCLANIGAKLGANTASLAAKGAEFSAKVAQISTGISNTVGSAVTKLGGSFAGLTMSHAIRTGSQATQVAVGVGSGITQTINNKKQADLQHNNADLALNKADMAALQSIIDRLKEELSHLSESHQQVMELIFQMINAKGDMLHNLAGRPHTV.

A coiled-coil region spans residues 129–160 (IQRLHEQNMKKIEENQEKIKETEENAKQVKKS). Transmembrane regions (helical) follow at residues 176-196 (VIVG…AMMV) and 224-244 (ILGP…TVMT). A coiled-coil region spans residues 345–379 (LALNKADMAALQSIIDRLKEELSHLSESHQQVMEL).

The protein belongs to the SctE/SipB/YopB family. The core secretion machinery of the T3SS is composed of approximately 20 different proteins, including cytoplasmic components, a base, an export apparatus and a needle. This subunit is involved in the formation of a pore, called the translocon, in host membrane. Interacts with YopD/SctB. Together with YopD/SctB, forms a multimeric integral membrane complex.

The protein localises to the secreted. It is found in the host membrane. Functionally, component of the type III secretion system (T3SS), also called injectisome, which is used to inject bacterial effector proteins into eukaryotic host cells. YopB/SctE and YopD/SctB are inserted into the host membrane where they form a pore and allow the translocation of effector proteins into the cytosol of target cells. Is an essential virulence determinant. Required for YopE and YopH translocation. Shows membrane disruptive activity in vitro. Interaction with the host cell triggers a signaling response, via activation of the small GTPase Ras, the MAPK kinases ERK and JNK and the nuclear factor NF-kappa-B pathways, and production of the proinflammatory cytokine interleukin-8 (IL-8). YopB/SctE-dependent signaling response is counteracted by YopE, YopH and YopJ in infected host cells. YopB/SctE is directly responsible for signaling and its insertion in the membrane is important to activate the signaling response in the host cell. The protein is Type 3 secretion system translocon protein SctE of Yersinia pseudotuberculosis serotype I (strain IP32953).